The primary structure comprises 272 residues: Shikimate dehydrogenase (NADP(+)) (272 aa).

Shikimate is bound by residues 14-16 and Thr61; that span reads SKS. Lys65 functions as the Proton acceptor in the catalytic mechanism. Glu77 is a binding site for NADP(+). Positions 86 and 102 each coordinate shikimate. NADP(+) is bound by residues 126-130, 149-154, and Met213; these read GAGGA and NRTQEK. Position 215 (Tyr215) interacts with shikimate. Gly237 contacts NADP(+).

Belongs to the shikimate dehydrogenase family. Homodimer.

The enzyme catalyses shikimate + NADP(+) = 3-dehydroshikimate + NADPH + H(+). The protein operates within metabolic intermediate biosynthesis; chorismate biosynthesis; chorismate from D-erythrose 4-phosphate and phosphoenolpyruvate: step 4/7. Involved in the biosynthesis of the chorismate, which leads to the biosynthesis of aromatic amino acids. Catalyzes the reversible NADPH linked reduction of 3-dehydroshikimate (DHSA) to yield shikimate (SA). This chain is Shikimate dehydrogenase (NADP(+)), found in Erwinia tasmaniensis (strain DSM 17950 / CFBP 7177 / CIP 109463 / NCPPB 4357 / Et1/99).